A 394-amino-acid chain; its full sequence is Probable pectate lyase 16 (394 aa).

The first 22 residues, Met-1–Ala-22, serve as a signal peptide directing secretion. Ca(2+) is bound by residues Asp-192, Asp-216, and Asp-220. The active site involves Arg-272.

This sequence belongs to the polysaccharide lyase 1 family. It depends on Ca(2+) as a cofactor.

It carries out the reaction Eliminative cleavage of (1-&gt;4)-alpha-D-galacturonan to give oligosaccharides with 4-deoxy-alpha-D-galact-4-enuronosyl groups at their non-reducing ends.. It participates in glycan metabolism; pectin degradation; 2-dehydro-3-deoxy-D-gluconate from pectin: step 2/5. This Arabidopsis thaliana (Mouse-ear cress) protein is Probable pectate lyase 16.